A 2214-amino-acid chain; its full sequence is MSVELPSLVVCGPQLEEIPDATYLARLRSSLLHDPYLRSLKQEALELHEMWPLLSATEPSLARFDAAPLLHSFAEWIRTGDSHVLRLAGGTLRNTQLALLTVLAHLLEYTTYLQHRHHHDHAQSEHAVLTAVHDGGVQGLSIGVLSAIAISCSQSRMHLARYGAVALRLAVCAGAWKDLDEMHAAEPPVCLEARWEGGGARAFKAVLDSYPQAYAHVREDASNATVIVPESSAAAMARKLEEDGIEARQVGLQGLSHRPDHFAACQKLFNLCSSLPMLRFPEHCHPLVPLTRNGNAEAVDDGASLHEMALRCILLEKPDSAAITAQCVAAISRQAGEPRVLLLGRVECIPRSVPARLIRPMAAGHSLYVYPDESIAIVGASCRFAGSETPAGFWDTLRERRSTLGKAPVWRGYGSEEEPFWGNFLASAGAFDHAFFRKSPREAAYMDPQHRLALHLAYEALESGGYFNPAAGTQTYDVGCYVGVYSSDYEDNVNARPPTPFSFTGTARAFASGRISQFFGWTGPSLIVDTACSSSGVAIHTACKAIQSGECTMALAGGVNLMTSPKSHQNLAAASLMSRTGQCKPFDASADGYCRGEGGGFVLLKRLSSAVADNDRVLGVLAASAINNSKGSLTITAPSLESQAALYQSVLRKAGMQPDQVSYVEAHGTGTQKGDPVECHSLRRVFGRSSRNSPPLRFGSVKGNIGHSEGASGVASLVKVLLMLQHGLIAPQANFSVLNPAAPNLEEANMEIPLYLQPWDAAFRAACVNNYGAAGNNTAMIVCQPPATQPVSRPSSVQKRHQYPFMLTAHSDASLRQHCRILLQFVEDQQAWAGDDLLASLAFHLAQRQSHQLGYRTAFSARSIDDLKARLGEQNTQTRGNCNPVVLVFAGQTGHRPRLSEEAYHSSFLLQHHLDRCDRTLQTLGLRGLFPQVFGTQAVDDLVDLHCMLFSIQYATAAAWIDAGLDVRKLVGHSLGQLTALCVARVLTLRDALKMISGRAALIQSKWGPEQGCMLSVDSDAVTVRALIDSMASEEKVEIACYNAPSSHVVVGKAGATAAFESAALSAGVRTKRLAITHAFHSPMVDSIMEDYESLLRELQFHSPTIPIEPCEQSGGSWENLTPERVARQSRAPVYFGAAVSRVERELGSCVWLEAGAGPAGVTMARRAASSSSHAFLSARLGSPDAMDSLADTTLSLWREGVRVQFWPFHPWQRHCFRLLELPPYQFETTHHWLPFASAPESAAQQPTTANDVAPQLVSVVRSSGGADPEAAEFTINQHSEEYALFVGGRTVLGHALSPPSVYLESAARALGLVSAAAGGPAALPPHFEQVQLHAPLGIDPRRRIRLRLQKHNTSAWEFVFDSQAPALDGGQTFQLQASGIIKSQEQDRAVAGPYRPLLRRLIDHERCRVLLEDSGASVVQGAFVKNILGRVASYEDSYFGIRSITSKGHEAVGVVDVPEIAHQRCAETRVNPPLLDNFMLVAEMHAGNLDACGSDQMYVCNGFDALVPHSNDGSLRGPFTVYSKLERESDRVFVGDVFVLTGGQKTLSLAILGARFSKVPVRSLQRALEAANGSPNVRTAEALDHSAVAIEARDSALTSPPIRPHAPPSSDAVSTISLNEVKTTTERVISETTGVPRERINDATLLGDLGVDSLMATELQVRFSDVLHVDLAIGTLCEHGMTAGRLCQEIHSRLSGVPQLSPHDTDRSSDLSAGQPPSTPKASTQEQEHFIVELSKLLAEHLNCSPDIPPETPLALMGLDSLLAIQLASDMESRFGKKSSPMNIDENTTFSDLCRVLSGADLPGFPRTSDNRRSEEGSVGHVGPEKSEASFFREREDVIKLEFDRAKQRYGVFSEQAGLAGFYARVYPRQMALVLAYIVEAFRTLGCDVATLRAGERLPPIPHEPRYEKLVRRYLQLLEDAGLITSSGEHPPAHLRTAKALEHAESSRLHRAILADFPAYRPDHRLLQLTGPRLADCVSGKVDPLQLLFHGPASRQLLEAFYVSSPMFATATRMMSEFVGQLLRKHGGCSERLRVLEVGAGTGATTQQLLDQLVASGAAFTYTFTDVSSSLVAAARRRLEARYAAAGHEMHFAVLDIERPPPQRLLHSQDLVVASNVLHATRSLSDTCSNVQRLLRPGCGVLCLLELTRPLPWLDCVFGLLDGWWRFADSRTYPLVDEWRWKACLLNAGFRHVDWTDDESREADLFRWILALA.

Residues 75–178 (EWIRTGDSHV…LAVCAGAWKD (104 aa)) form an N-terminal acylcarrier protein transacylase domain (SAT) region. Residues 372–784 (DESIAIVGAS…GNNTAMIVCQ (413 aa)) enclose the Ketosynthase family 3 (KS3) domain. Active-site for beta-ketoacyl synthase activity residues include Cys-532, His-667, and His-707. The tract at residues 888–1184 (VFAGQTGHRP…AFLSARLGSP (297 aa)) is malonyl-CoA:ACP transacylase (MAT) domain. Ser-974 functions as the For acyl/malonyl transferase activity in the catalytic mechanism. Residues 1255–1389 (PQLVSVVRSS…GIIKSQEQDR (135 aa)) are N-terminal hotdog fold. Residues 1255 to 1566 (PQLVSVVRSS…FSKVPVRSLQ (312 aa)) form the PKS/mFAS DH domain. The segment at 1265–1560 (GGADPEAAEF…AILGARFSKV (296 aa)) is product template (PT) domain. The C-terminal hotdog fold stretch occupies residues 1416–1566 (GASVVQGAFV…FSKVPVRSLQ (151 aa)). Carrier domains lie at 1620–1695 (NEVK…HSRL) and 1722–1802 (KAST…SGAD). The residue at position 1654 (Ser-1654) is an O-(pantetheine 4'-phosphoryl)serine. The segment at 1698–1728 (VPQLSPHDTDRSSDLSAGQPPSTPKASTQEQ) is disordered. The span at 1711 to 1726 (DLSAGQPPSTPKASTQ) shows a compositional bias: polar residues. The residue at position 1762 (Ser-1762) is an O-(pantetheine 4'-phosphoryl)serine. The tract at residues 1805-1827 (GFPRTSDNRRSEEGSVGHVGPEK) is disordered. Residues 1810–1827 (SDNRRSEEGSVGHVGPEK) are compositionally biased toward basic and acidic residues. Residues 1958–2210 (FPAYRPDHRL…SREADLFRWI (253 aa)) are methyltransferase (CMeT) domain.

It functions in the pathway secondary metabolite biosynthesis; terpenoid biosynthesis. In terms of biological role, non-reducing polyketide synthase; part of the gene cluster that mediates the biosynthesis of diterpenoid pyrones. The first step of the pathway is the synthesis of the alpha-pyrone moiety by the polyketide synthase dpmpA via condensation of one acetyl-CoA starter unit with 3 malonyl-CoA units and 2 methylations. The alpha-pyrone is then combined with geranylgeranyl pyrophosphate (GGPP) formed by the GGPP synthase dpmpD through the action of the prenyltransferase dpmpC to yield a linear alpha-pyrone diterpenoid. Subsequent steps in the diterpenoid pyrone biosynthetic pathway involve the decalin core formation, which is initiated by the epoxidation of the C10-C11 olefin by the FAD-dependent oxidoreductase dpmpE, and is followed by a cyclization cascade catalyzed by the terpene cyclase dpmpB. The short chain dehydrogenase/reductase dpmpG then oxidizes the 8S hydroxy group to a ketone and the short chain dehydrogenase/reductase dpmpH reduces the ketone to the 8R hydroxy group to yield higginsianin B. Higginsianin B is further methylated by the methyltransferase dpmpI to produce the intermediate named FDDP B. The cytochrome P450 monooxygenase dpmpJ then oxidizes the C-26 methyl to primary alcohol, producing the final diterpenoid pyrone with a C-26 primary alcohol on the gamma-pyrone moiety named FDDP C. This Macrophomina phaseolina (strain MS6) (Charcoal rot fungus) protein is Non-reducing polyketide synthase dpmpA.